The chain runs to 461 residues: F-box protein At3g62230 (461 aa).

One can recognise an F-box domain in the interval 7-55 (VDIISTLSDFLLVLIISNLSFKEALSTSRLSTRWRHICRETRNISFRED).

Part of a SCF (ASK-cullin-F-box) protein ligase complex. Interacts with ASK4.

The protein resides in the nucleus. The protein operates within protein modification; protein ubiquitination. Its function is as follows. Component of SCF(ASK-cullin-F-box) E3 ubiquitin ligase complexes, which may mediate the ubiquitination and subsequent proteasomal degradation of target proteins. This Arabidopsis thaliana (Mouse-ear cress) protein is F-box protein At3g62230.